Reading from the N-terminus, the 876-residue chain is Alanine--tRNA ligase (876 aa).

Residues His566, His570, Cys668, and His672 each coordinate Zn(2+).

This sequence belongs to the class-II aminoacyl-tRNA synthetase family. It depends on Zn(2+) as a cofactor.

It localises to the cytoplasm. It carries out the reaction tRNA(Ala) + L-alanine + ATP = L-alanyl-tRNA(Ala) + AMP + diphosphate. In terms of biological role, catalyzes the attachment of alanine to tRNA(Ala) in a two-step reaction: alanine is first activated by ATP to form Ala-AMP and then transferred to the acceptor end of tRNA(Ala). Also edits incorrectly charged Ser-tRNA(Ala) and Gly-tRNA(Ala) via its editing domain. The protein is Alanine--tRNA ligase of Petrotoga mobilis (strain DSM 10674 / SJ95).